Reading from the N-terminus, the 500-residue chain is UDP-N-acetylmuramoyl-L-alanyl-D-glutamate--2,6-diaminopimelate ligase (500 aa).

Ser32 is a binding site for UDP-N-acetyl-alpha-D-muramoyl-L-alanyl-D-glutamate. Residue 117–123 participates in ATP binding; sequence GTNGKTT. UDP-N-acetyl-alpha-D-muramoyl-L-alanyl-D-glutamate contacts are provided by residues 159–160, Ser186, Gln192, and Arg194; that span reads TT. Lys226 is subject to N6-carboxylysine. Residues Arg395, 419–422, Gly470, and Glu474 contribute to the meso-2,6-diaminopimelate site; that span reads DNPR. The short motif at 419–422 is the Meso-diaminopimelate recognition motif element; that stretch reads DNPR.

The protein belongs to the MurCDEF family. MurE subfamily. Mg(2+) is required as a cofactor. In terms of processing, carboxylation is probably crucial for Mg(2+) binding and, consequently, for the gamma-phosphate positioning of ATP.

The protein localises to the cytoplasm. It carries out the reaction UDP-N-acetyl-alpha-D-muramoyl-L-alanyl-D-glutamate + meso-2,6-diaminopimelate + ATP = UDP-N-acetyl-alpha-D-muramoyl-L-alanyl-gamma-D-glutamyl-meso-2,6-diaminopimelate + ADP + phosphate + H(+). It participates in cell wall biogenesis; peptidoglycan biosynthesis. Its function is as follows. Catalyzes the addition of meso-diaminopimelic acid to the nucleotide precursor UDP-N-acetylmuramoyl-L-alanyl-D-glutamate (UMAG) in the biosynthesis of bacterial cell-wall peptidoglycan. The protein is UDP-N-acetylmuramoyl-L-alanyl-D-glutamate--2,6-diaminopimelate ligase of Parasynechococcus marenigrum (strain WH8102).